The primary structure comprises 274 residues: Dermonecrotic toxin LspiSicTox-betaIII1 G (274 aa).

H5 is an active-site residue. Mg(2+)-binding residues include E25 and D27. Residue H41 is the Nucleophile of the active site. 2 cysteine pairs are disulfide-bonded: C45–C51 and C47–C189. The N-linked (GlcNAc...) asparagine glycan is linked to N66. D85 lines the Mg(2+) pocket.

This sequence belongs to the arthropod phospholipase D family. Class II subfamily. The cofactor is Mg(2+). In terms of tissue distribution, expressed by the venom gland.

It localises to the secreted. It catalyses the reaction an N-(acyl)-sphingosylphosphocholine = an N-(acyl)-sphingosyl-1,3-cyclic phosphate + choline. The catalysed reaction is an N-(acyl)-sphingosylphosphoethanolamine = an N-(acyl)-sphingosyl-1,3-cyclic phosphate + ethanolamine. The enzyme catalyses a 1-acyl-sn-glycero-3-phosphocholine = a 1-acyl-sn-glycero-2,3-cyclic phosphate + choline. It carries out the reaction a 1-acyl-sn-glycero-3-phosphoethanolamine = a 1-acyl-sn-glycero-2,3-cyclic phosphate + ethanolamine. Dermonecrotic toxins cleave the phosphodiester linkage between the phosphate and headgroup of certain phospholipids (sphingolipid and lysolipid substrates), forming an alcohol (often choline) and a cyclic phosphate. This toxin acts on sphingomyelin (SM). It may also act on ceramide phosphoethanolamine (CPE), lysophosphatidylcholine (LPC) and lysophosphatidylethanolamine (LPE), but not on lysophosphatidylserine (LPS), and lysophosphatidylglycerol (LPG). It acts by transphosphatidylation, releasing exclusively cyclic phosphate products as second products. Induces dermonecrosis, hemolysis, increased vascular permeability, edema, inflammatory response, and platelet aggregation. This chain is Dermonecrotic toxin LspiSicTox-betaIII1 G, found in Loxosceles spinulosa (Recluse spider).